A 292-amino-acid polypeptide reads, in one-letter code: uncharacterized protein (292 aa).

This is an uncharacterized protein from Haemophilus influenzae (strain ATCC 51907 / DSM 11121 / KW20 / Rd).